The chain runs to 329 residues: tRNA(Ile)-lysidine synthase, chloroplastic (329 aa).

32-37 (SGGQDS) contacts ATP.

The protein belongs to the tRNA(Ile)-lysidine synthase family.

Its subcellular location is the plastid. It localises to the chloroplast. It catalyses the reaction cytidine(34) in tRNA(Ile2) + L-lysine + ATP = lysidine(34) in tRNA(Ile2) + AMP + diphosphate + H(+). Its function is as follows. Ligates lysine onto the cytidine present at position 34 of the AUA codon-specific tRNA(Ile) that contains the anticodon CAU, in an ATP-dependent manner. Cytidine is converted to lysidine, thus changing the amino acid specificity of the tRNA from methionine to isoleucine. The polypeptide is tRNA(Ile)-lysidine synthase, chloroplastic (Pyropia yezoensis (Susabi-nori)).